A 270-amino-acid chain; its full sequence is Phosphatidate cytidylyltransferase (270 aa).

Helical transmembrane passes span 19–39, 53–73, 76–96, 101–121, 126–146, 183–203, and 248–268; these read LWLTWVGGVGFTLFSIAIGLA, TAFSRLFGWAWLIVTGILLIL, GALLTIGFLVAGCAILLVTQW, GWPAAGLFYAGFSALSLSLLR, FGFTTIVFLFAVVWSTDITAY, LVASLVAAPGGWGVPVLALLL, and ALLYLFGAIFAEPDVLSAIFF.

The protein belongs to the CDS family.

Its subcellular location is the cell inner membrane. The enzyme catalyses a 1,2-diacyl-sn-glycero-3-phosphate + CTP + H(+) = a CDP-1,2-diacyl-sn-glycerol + diphosphate. It participates in phospholipid metabolism; CDP-diacylglycerol biosynthesis; CDP-diacylglycerol from sn-glycerol 3-phosphate: step 3/3. The protein is Phosphatidate cytidylyltransferase (cdsA) of Brucella abortus (strain 2308).